We begin with the raw amino-acid sequence, 263 residues long: Glutamate racemase (263 aa).

Substrate contacts are provided by residues 12 to 13 (DS) and 44 to 45 (YG). The active-site Proton donor/acceptor is the Cys-75. Residue 76-77 (NT) coordinates substrate. Cys-186 serves as the catalytic Proton donor/acceptor. 187-188 (TH) contacts substrate.

It belongs to the aspartate/glutamate racemases family.

It catalyses the reaction L-glutamate = D-glutamate. Its pathway is cell wall biogenesis; peptidoglycan biosynthesis. Its function is as follows. Provides the (R)-glutamate required for cell wall biosynthesis. This is Glutamate racemase from Ectopseudomonas mendocina (strain ymp) (Pseudomonas mendocina).